The sequence spans 250 residues: Ribosomal RNA small subunit methyltransferase J (250 aa).

S-adenosyl-L-methionine is bound by residues 101-102 (RD), 117-118 (ER), 153-154 (SS), and Asp-171.

The protein belongs to the methyltransferase superfamily. RsmJ family.

The protein resides in the cytoplasm. The enzyme catalyses guanosine(1516) in 16S rRNA + S-adenosyl-L-methionine = N(2)-methylguanosine(1516) in 16S rRNA + S-adenosyl-L-homocysteine + H(+). Functionally, specifically methylates the guanosine in position 1516 of 16S rRNA. This Escherichia coli O81 (strain ED1a) protein is Ribosomal RNA small subunit methyltransferase J.